Reading from the N-terminus, the 250-residue chain is Entry-fusion complex associated protein OPG095 (250 aa).

Residue Gly-2 is the site of N-myristoyl glycine; by host attachment. The segment at 2 to 12 (GAAASIQTTVN) is targeting to MV membrane. The Virion surface portion of the chain corresponds to 2–183 (GAAASIQTTV…IAPKQVAGTG (182 aa)). 3 cysteine pairs are disulfide-bonded: Cys-34–Cys-57, Cys-49–Cys-136, and Cys-116–Cys-158. Residues 184 to 204 (VQFYMIVIGVIILAALFMYYA) form a helical membrane-spanning segment. The Intravirion segment spans residues 205–250 (KRMLFTSTNDKIKLILANKENVHWTTYMDTFFRTSPMVIATTDMQN).

This sequence belongs to the orthopoxvirus OPG095 family. Component of the entry fusion complex (EFC) composed of OPG053/F9, OPG076/O3, OPG086/G3, OPG094/G9, OPG095/L1, OPG099/L5, OPG107/H2, OPG143/A16, OPG104/J5, OPG147/A21 and OPG155/A28. Except for OPG095/L1 and OPG053/F9, each of the EFC proteins is required for assembly or stability of the complex. In terms of processing, myristoylated. Post-translationally, disulfid bonds are oxidized in the cytoplasm by OPG088 protein. Unglycosylated because produced in viral factories instead of the classic ER -Golgi route.

The protein localises to the virion membrane. Component of the entry fusion complex (EFC), which consists of 11 proteins. During cell infection, this complex mediates entry of the virion core into the host cytoplasm by a two-step mechanism consisting of lipid mixing of the viral and cellular membranes and subsequent pore formation. The chain is Entry-fusion complex associated protein OPG095 (OPG099) from Bos taurus (Bovine).